A 125-amino-acid polypeptide reads, in one-letter code: Large ribosomal subunit protein bL12 (125 aa).

It belongs to the bacterial ribosomal protein bL12 family. As to quaternary structure, homodimer. Part of the ribosomal stalk of the 50S ribosomal subunit. Forms a multimeric L10(L12)X complex, where L10 forms an elongated spine to which 2 to 4 L12 dimers bind in a sequential fashion. Binds GTP-bound translation factors.

Its function is as follows. Forms part of the ribosomal stalk which helps the ribosome interact with GTP-bound translation factors. Is thus essential for accurate translation. The polypeptide is Large ribosomal subunit protein bL12 (Porphyromonas gingivalis (strain ATCC 33277 / DSM 20709 / CIP 103683 / JCM 12257 / NCTC 11834 / 2561)).